Consider the following 525-residue polypeptide: Pre-mRNA-processing factor 19 homolog 2 (525 aa).

The 70-residue stretch at 1–70 folds into the U-box domain; it reads MNCAISGEVP…PKTLHTASIP (70 aa). WD repeat units lie at residues 220–261, 262–301, 307–346, 351–390, 393–431, 433–469, and 478–517; these read TNKP…STLT, GHSKKVTSVKFVGDSDLVLTASADKTVRIWRNPGDGNYAC, DHSAEVRAVTVHPTNKYFVSASLDGTWCFYDLSSGSCLAQ, SKNVDYTAAAFHPDGLILGTGTSQSVVKIWDVKSQANVAK, GHTGEVTAISFSENGYFLATAAEDGVRLWDLRKLRNFKS, LSADANSVEFDPSGSYLGIAASDIKVYQTASVKAEWN, and SGTGKATCVKFGSDAQYVAVGSMDRNLRIFGLPGDEKANV. The DWD box motif lies at 409-424; that stretch reads FLATAAEDGVRLWDLR.

The protein belongs to the WD repeat PRP19 family. As to quaternary structure, homotetramer. Component of the multiprotein assembly MOS4-associated complex (MAC) at least composed of MOS4, CDC5, PRL1 and PRP19 which is related to the PRP19C/Prp19 complex/NTC/Nineteen complex identified in other organisms. Associated with the spliceosome.

The protein resides in the nucleus. It carries out the reaction S-ubiquitinyl-[E2 ubiquitin-conjugating enzyme]-L-cysteine + [acceptor protein]-L-lysine = [E2 ubiquitin-conjugating enzyme]-L-cysteine + N(6)-ubiquitinyl-[acceptor protein]-L-lysine.. It participates in protein modification; protein ubiquitination. Probable ubiquitin-protein ligase which is mainly involved pre-mRNA splicing and DNA repair. Component of the MAC complex that probably regulates defense responses through transcriptional control and thereby is essential for plant innate immunity. This chain is Pre-mRNA-processing factor 19 homolog 2 (PRP19B), found in Arabidopsis thaliana (Mouse-ear cress).